Here is a 274-residue protein sequence, read N- to C-terminus: Prolyl 4-hydroxylase 13 (274 aa).

Topologically, residues 1-10 (MRSYGKEKKL) are cytoplasmic. The chain crosses the membrane as a helical; Signal-anchor for type II membrane protein span at residues 11 to 31 (VFPYVFIACCFFLAIFGFCFF). At 32–274 (NLFSQGISFS…TKWIRDQTYD (243 aa)) the chain is on the lumenal side. The region spanning 151–270 (YYESFNILRY…KWVATKWIRD (120 aa)) is the Fe2OG dioxygenase domain. Positions 169 and 171 each coordinate Fe cation. A glycan (N-linked (GlcNAc...) asparagine) is linked at Asn-242. His-251 is a Fe cation binding site. Lys-261 is a 2-oxoglutarate binding site.

This sequence belongs to the P4HA family. It depends on Fe(2+) as a cofactor. Requires L-ascorbate as cofactor. Expressed in epidermal root hair cells (trichoblasts) root hairless cells (atrichoblasts).

It is found in the endoplasmic reticulum membrane. The catalysed reaction is L-prolyl-[collagen] + 2-oxoglutarate + O2 = trans-4-hydroxy-L-prolyl-[collagen] + succinate + CO2. Its function is as follows. Catalyzes the post-translational formation of 4-hydroxyproline in -Xaa-Pro-Gly- sequences in proline-rich peptide sequences of plant glycoproteins and other proteins. Hydroxyprolines are important constituent of many plant cell wall glycoproteins such as extensins, hydroxyproline-rich glycoproteins, lectins and arabinogalactan proteins. Possesses high affinity for leucine-rich repeat and proline-rich extensins of root cell walls that are essential for root hair development. Hydroxyprolines define the subsequent O-glycosylation sites by arabinosyltransferases which elongate the O-arabinosides on extensins. The polypeptide is Prolyl 4-hydroxylase 13 (Arabidopsis thaliana (Mouse-ear cress)).